Here is a 284-residue protein sequence, read N- to C-terminus: MAQRDTGGRLGAEFFTPGDSSFTAFLAAHRPALLSTRGLLPDGVRAAPDRVPHGTTVLALAYRDGVLIAGDRRATMGNLIAQRDLEKVHPADDYTAVAFAGTVGLALDMVKLYQVELAHFEKVEGVPMTLRAKATRLAGMIRQNLGQAMQGLAVVPLLVGYDLAARAGEHGRIFSFDVTGGPYEKTDFHAEGSGSPYARGALKKLFHPGMSRREAALAALQALYDAADDDSATGGPDISRRIFPVVSVITEDGFERLPESETEDLSREMVEQRHTRPDGPTAAM.

A propeptide spans 1 to 54 (removed in mature form; by autocatalysis); sequence MAQRDTGGRLGAEFFTPGDSSFTAFLAAHRPALLSTRGLLPDGVRAAPDRVPHG. Catalysis depends on Thr55, which acts as the Nucleophile. The span at 256–277 shows a compositional bias: basic and acidic residues; sequence RLPESETEDLSREMVEQRHTRP. The disordered stretch occupies residues 256–284; that stretch reads RLPESETEDLSREMVEQRHTRPDGPTAAM.

Belongs to the peptidase T1B family. The 20S proteasome core is composed of 14 alpha and 14 beta subunits that assemble into four stacked heptameric rings, resulting in a barrel-shaped structure. The two inner rings, each composed of seven catalytic beta subunits, are sandwiched by two outer rings, each composed of seven alpha subunits. The catalytic chamber with the active sites is on the inside of the barrel. Has a gated structure, the ends of the cylinder being occluded by the N-termini of the alpha-subunits. Is capped by the proteasome-associated ATPase, ARC.

The protein localises to the cytoplasm. The catalysed reaction is Cleavage of peptide bonds with very broad specificity.. The protein operates within protein degradation; proteasomal Pup-dependent pathway. Its activity is regulated as follows. The formation of the proteasomal ATPase ARC-20S proteasome complex, likely via the docking of the C-termini of ARC into the intersubunit pockets in the alpha-rings, may trigger opening of the gate for substrate entry. Interconversion between the open-gate and close-gate conformations leads to a dynamic regulation of the 20S proteasome proteolysis activity. Functionally, component of the proteasome core, a large protease complex with broad specificity involved in protein degradation. This is Proteasome subunit beta 1 from Streptomyces avermitilis (strain ATCC 31267 / DSM 46492 / JCM 5070 / NBRC 14893 / NCIMB 12804 / NRRL 8165 / MA-4680).